Here is a 577-residue protein sequence, read N- to C-terminus: Zinc finger-containing ubiquitin peptidase 1 (577 aa).

The segment at 2 to 24 adopts a C2H2-type 1 zinc-finger fold; that stretch reads LSCNICGETVNSEPDMKAHLIVH. The C2H2-type 2; atypical zinc-finger motif lies at 29-52; sequence IICPFCKLSGINYNEICFHIETVH. A compositionally biased stretch (basic and acidic residues) spans 124–137; the sequence is ESRKYQKSREKKPG. The interval 124 to 145 is disordered; that stretch reads ESRKYQKSREKKPGLSEAQGSI. The C2H2-type 3; atypical zinc finger occupies 153-176; the sequence is PECPFCGKIEGCSQDMEIHVKTKH. The C2H2-type 4 zinc-finger motif lies at 192-214; it reads YDCPMCGLVCTNYHILQEHVDLH. The segment at 225 to 247 is MIU; that stretch reads DRVQCSSDRELAHRLQQEEDRKR. Positions 238-260 are disordered; sequence RLQQEEDRKRKSEESRQEREEFQ. The segment at 248-273 is zUBD/ZHA; the sequence is KSEESRQEREEFQKLQRQYGLDNSGG. K261 is subject to N6-acetyllysine. C359 serves as the catalytic Nucleophile. H490 functions as the Proton acceptor in the catalytic mechanism. D511 is a catalytic residue.

Belongs to the peptidase C78 family. ZUFSP subfamily. Interacts with RPA1 and RPA2.

It localises to the cytoplasm. Its subcellular location is the nucleus. It catalyses the reaction Thiol-dependent hydrolysis of ester, thioester, amide, peptide and isopeptide bonds formed by the C-terminal Gly of ubiquitin (a 76-residue protein attached to proteins as an intracellular targeting signal).. Its function is as follows. Deubiquitinase with endodeubiquitinase activity that specifically interacts with and cleaves 'Lys-63'-linked long polyubiquitin chains. Shows only weak activity against 'Lys-11' and 'Lys-48'-linked chains. Plays an important role in genome stability pathways, functioning to prevent spontaneous DNA damage and also promote cellular survival in response to exogenous DNA damage. Modulates the ubiquitination status of replication protein A (RPA) complex proteins in response to replication stress. The chain is Zinc finger-containing ubiquitin peptidase 1 from Mus musculus (Mouse).